Consider the following 239-residue polypeptide: Probable transcriptional regulatory protein RBAM_007230 (239 aa).

It belongs to the TACO1 family. YeeN subfamily.

It localises to the cytoplasm. This chain is Probable transcriptional regulatory protein RBAM_007230, found in Bacillus velezensis (strain DSM 23117 / BGSC 10A6 / LMG 26770 / FZB42) (Bacillus amyloliquefaciens subsp. plantarum).